The following is a 201-amino-acid chain: 3-isopropylmalate dehydratase small subunit (201 aa).

It belongs to the LeuD family. LeuD type 1 subfamily. As to quaternary structure, heterodimer of LeuC and LeuD.

The catalysed reaction is (2R,3S)-3-isopropylmalate = (2S)-2-isopropylmalate. It functions in the pathway amino-acid biosynthesis; L-leucine biosynthesis; L-leucine from 3-methyl-2-oxobutanoate: step 2/4. Catalyzes the isomerization between 2-isopropylmalate and 3-isopropylmalate, via the formation of 2-isopropylmaleate. In Rhodopseudomonas palustris (strain BisB18), this protein is 3-isopropylmalate dehydratase small subunit.